Here is a 146-residue protein sequence, read N- to C-terminus: Basic phospholipase A2 (146 aa).

Positions 1 to 21 (MNPAHLLVLAAVCVSLLGASS) are cleaved as a signal peptide. The propeptide occupies 22–27 (VPPRPL). 7 disulfides stabilise this stretch: C38–C97, C52–C145, C54–C70, C69–C127, C76–C120, C86–C113, and C106–C118. Ca(2+) is bound by residues Y53, G55, and G57. H73 is an active-site residue. D74 is a Ca(2+) binding site. N109 carries an N-linked (GlcNAc...) asparagine glycan. D121 is an active-site residue.

This sequence belongs to the phospholipase A2 family. Group I subfamily. D49 sub-subfamily. Requires Ca(2+) as cofactor. As to expression, expressed by the venom gland.

It localises to the secreted. It catalyses the reaction a 1,2-diacyl-sn-glycero-3-phosphocholine + H2O = a 1-acyl-sn-glycero-3-phosphocholine + a fatty acid + H(+). PLA2 catalyzes the calcium-dependent hydrolysis of the 2-acyl groups in 3-sn-phosphoglycerides. This is Basic phospholipase A2 from Micrurus corallinus (Brazilian coral snake).